A 472-amino-acid chain; its full sequence is 2-oxoglutarate carboxylase small subunit (472 aa).

The 445-residue stretch at 1 to 445 folds into the Biotin carboxylation domain; sequence MFKKVLVANR…TTRYLEEHPH (445 aa). ATP contacts are provided by Lys115 and Glu199. The region spanning 119–316 is the ATP-grasp domain; the sequence is KEVMKRAGVP…IVKWQIRIAA (198 aa). Residue Arg291 is part of the active site.

Heterohexadecamer of 8 large subunits and 8 small subunits. Mg(2+) serves as cofactor. Requires Mn(2+) as cofactor. It depends on Co(2+) as a cofactor.

The catalysed reaction is hydrogencarbonate + 2-oxoglutarate + ATP = (S)-oxalosuccinate + ADP + phosphate + H(+). This chain is 2-oxoglutarate carboxylase small subunit, found in Hydrogenobacter thermophilus (strain DSM 6534 / IAM 12695 / TK-6).